Consider the following 276-residue polypeptide: Carboxysome assembly protein CcmO (276 aa).

BMC domains are found at residues 16–100 and 120–204; these read ALGV…AVLP and AIGL…DSLP. Disordered regions lie at residues 200 to 219 and 252 to 276; these read MDSL…LQLP and QSAL…RDDQ.

It belongs to the bacterial microcompartments protein family. As to quaternary structure, homooligomerizes, possibly as a trimer, interacts with CcmK2 in the carboxysome.

The protein resides in the carboxysome. Required for formation of the carboxysome, a polyhedral inclusion where RuBisCO (ribulose bisphosphate carboxylase, rbcL-rbcS) is sequestered. Required for recruitment of major shell protein CcmK2 to the pre-carboxysome. Suggested to be a carboxysome shell protein, but it is not detected in gels, mass spectrometry or by protein sequencing. In terms of biological role, beta-carboxysome assembly initiates when soluble RuBisCO is condensed into a liquid matrix in a pre-carboxysome by the RbcS-like domains of probably both CcmM58 and CcmM35. CcmN interacts with the N-terminus of CcmM58, and then recruits the CcmK2 major shell protein via CcmN's encapsulation peptide. Shell formation requires CcmK proteins and CcmO. CcmL caps the otherwise elongated carboxysome. Once fully encapsulated carboxysomes are formed, they migrate within the cell probably via interactions with the cytoskeleton. The protein is Carboxysome assembly protein CcmO of Synechococcus elongatus (strain ATCC 33912 / PCC 7942 / FACHB-805) (Anacystis nidulans R2).